The chain runs to 307 residues: Putative flagellar export/assembly protein LafU (307 aa).

The chain crosses the membrane as a helical span at residues 32–54; the sequence is AWKVAFADFTLAMMALFMTLWIV. The disordered stretch occupies residues 87-108; it reads SPSHPPKPATVAAPEETEKKAR. Residues 154-272 form the OmpA-like domain; the sequence is LRVLIKDDQN…RIEIMVLTKS (119 aa).

It belongs to the MotB family.

It localises to the cell inner membrane. In terms of biological role, part of the flagellar gene cluster Flag-2. However, the Flag-2 flagellar system could be inactive in strain 042 due to a frameshift in lfgC. The protein is Putative flagellar export/assembly protein LafU of Escherichia coli O44:H18 (strain 042 / EAEC).